The following is a 37-amino-acid chain: Lambda-hexatoxin-Hv1c (37 aa).

Cystine bridges form between cysteine 3–cysteine 17, cysteine 10–cysteine 22, cysteine 13–cysteine 14, and cysteine 16–cysteine 32.

It belongs to the neurotoxin 11 (kappa toxin) family. As to expression, expressed by the venom gland.

Its subcellular location is the secreted. In terms of biological role, this excitatory toxin inhibits insect calcium-activated potassium (KCa) channels (Slo-type). Pan-neuronal expression in Drosophila is lethal but flies engineered to express the toxin only in clock neurons have defects in circadian rhythm but a normal lifespan. This chain is Lambda-hexatoxin-Hv1c, found in Hadronyche versuta (Blue mountains funnel-web spider).